The chain runs to 450 residues: Chromosomal replication initiator protein DnaA (450 aa).

Residues 1-79 form a domain I, interacts with DnaA modulators region; it reads MENIHDLWNR…TGEELLIKFI (79 aa). Residues 79–111 are domain II; it reads ITPPNQSEDDFEFQRSSKKHRKPYEESTDFPQS. Residues 112–328 form a domain III, AAA+ region region; the sequence is MLNPKYTFDT…GALIRVVAYS (217 aa). The ATP site is built by Gly-156, Gly-158, Lys-159, and Thr-160. Residues 329–450 are domain IV, binds dsDNA; sequence SLINKEITAD…KEIEEKLKQL (122 aa).

Belongs to the DnaA family. As to quaternary structure, oligomerizes as a right-handed, spiral filament on DNA at oriC.

It localises to the cytoplasm. Its function is as follows. Plays an essential role in the initiation and regulation of chromosomal replication. ATP-DnaA binds to the origin of replication (oriC) to initiate formation of the DNA replication initiation complex once per cell cycle. Binds the DnaA box (a 9 base pair repeat at the origin) and separates the double-stranded (ds)DNA. Forms a right-handed helical filament on oriC DNA; dsDNA binds to the exterior of the filament while single-stranded (ss)DNA is stabiized in the filament's interior. The ATP-DnaA-oriC complex binds and stabilizes one strand of the AT-rich DNA unwinding element (DUE), permitting loading of DNA polymerase. After initiation quickly degrades to an ADP-DnaA complex that is not apt for DNA replication. Binds acidic phospholipids. This Geobacillus sp. (strain WCH70) protein is Chromosomal replication initiator protein DnaA.